Consider the following 258-residue polypeptide: Regulatory protein RecX (258 aa).

Belongs to the RecX family.

The protein localises to the cytoplasm. Modulates RecA activity. This chain is Regulatory protein RecX, found in Streptococcus thermophilus (strain ATCC BAA-491 / LMD-9).